The following is an 81-amino-acid chain: ATP synthase subunit c, chloroplastic (81 aa).

2 consecutive transmembrane segments (helical) span residues 3–23 (PLISAASVIAAGLSVGLASIG) and 57–77 (LAFMEALTIYGLVVALALLFA).

It belongs to the ATPase C chain family. F-type ATPases have 2 components, F(1) - the catalytic core - and F(0) - the membrane proton channel. F(1) has five subunits: alpha(3), beta(3), gamma(1), delta(1), epsilon(1). F(0) has four main subunits: a(1), b(1), b'(1) and c(10-14). The alpha and beta chains form an alternating ring which encloses part of the gamma chain. F(1) is attached to F(0) by a central stalk formed by the gamma and epsilon chains, while a peripheral stalk is formed by the delta, b and b' chains.

It localises to the plastid. It is found in the chloroplast thylakoid membrane. F(1)F(0) ATP synthase produces ATP from ADP in the presence of a proton or sodium gradient. F-type ATPases consist of two structural domains, F(1) containing the extramembraneous catalytic core and F(0) containing the membrane proton channel, linked together by a central stalk and a peripheral stalk. During catalysis, ATP synthesis in the catalytic domain of F(1) is coupled via a rotary mechanism of the central stalk subunits to proton translocation. Its function is as follows. Key component of the F(0) channel; it plays a direct role in translocation across the membrane. A homomeric c-ring of between 10-14 subunits forms the central stalk rotor element with the F(1) delta and epsilon subunits. The protein is ATP synthase subunit c, chloroplastic of Pinus koraiensis (Korean pine).